The primary structure comprises 59 residues: Cuticle protein 16 isoform D (59 aa).

The chain is Cuticle protein 16 isoform D from Limulus polyphemus (Atlantic horseshoe crab).